A 194-amino-acid polypeptide reads, in one-letter code: Peptidyl-tRNA hydrolase (194 aa).

Y17 is a binding site for tRNA. Residue H22 is the Proton acceptor of the active site. Positions 68, 70, and 116 each coordinate tRNA.

Belongs to the PTH family. As to quaternary structure, monomer.

The protein resides in the cytoplasm. It catalyses the reaction an N-acyl-L-alpha-aminoacyl-tRNA + H2O = an N-acyl-L-amino acid + a tRNA + H(+). Its function is as follows. Hydrolyzes ribosome-free peptidyl-tRNAs (with 1 or more amino acids incorporated), which drop off the ribosome during protein synthesis, or as a result of ribosome stalling. In terms of biological role, catalyzes the release of premature peptidyl moieties from peptidyl-tRNA molecules trapped in stalled 50S ribosomal subunits, and thus maintains levels of free tRNAs and 50S ribosomes. The chain is Peptidyl-tRNA hydrolase from Histophilus somni (strain 129Pt) (Haemophilus somnus).